The chain runs to 1164 residues: Phospholipid-transporting ATPase IA (1164 aa).

Topologically, residues 1–75 are cytoplasmic; that stretch reads MPTMRRTVSE…PRFLYSQFRR (75 aa). S25 carries the phosphoserine modification. T28 carries the post-translational modification Phosphothreonine. Residue S29 is modified to Phosphoserine. A helical membrane pass occupies residues 76-96; sequence AANSFFLFIALLQQIPDVSPT. Residues 97-100 lie on the Exoplasmic loop side of the membrane; sequence GRYT. The chain crosses the membrane as a helical span at residues 101–121; it reads TLVPLLFILAVAAIKEIIEDI. The Cytoplasmic segment spans residues 122–297; it reads KRHKADNAVN…SNVERITNVQ (176 aa). The helical transmembrane segment at 298-318 threads the bilayer; that stretch reads ILILFCILIAMSLVCSVGSAI. Topologically, residues 319–339 are exoplasmic loop; the sequence is WNRRHSGKDWYLHLHYGGASN. A helical membrane pass occupies residues 340-360; the sequence is FGLNFLTFIILFNNLIPISLL. Topologically, residues 361–866 are cytoplasmic; it reads VTLEVVKFTQ…KCILYCFYKN (506 aa). Residue D409 is the 4-aspartylphosphate intermediate of the active site. Positions 409, 410, and 411 each coordinate ATP. D409 lines the Mg(2+) pocket. T411 is a binding site for Mg(2+). S443 is modified (phosphoserine). Residues E508, F549, K572, R605, T685, G686, D687, 741–748, R775, and K781 contribute to the ATP site; that span reads ALIIDGKT. D801 contributes to the Mg(2+) binding site. ATP-binding residues include N804 and D805. Residue D805 coordinates Mg(2+). The helical transmembrane segment at 867 to 887 threads the bilayer; sequence IVLYIIEIWFAFVNGFSGQIL. At 888–890 the chain is on the exoplasmic loop side; it reads FER. A helical membrane pass occupies residues 891-911; it reads WCIGLYNVMFTAMPPLTLGIF. Residues 912-939 lie on the Cytoplasmic side of the membrane; sequence ERSCRKENMLKYPELYKTSQNALDFNTK. A helical membrane pass occupies residues 940-960; it reads VFWVHCLNGLFHSVILFWFPL. Over 961 to 977 the chain is Exoplasmic loop; the sequence is KALQYGTVFGNGKTSDY. The helical transmembrane segment at 978–998 threads the bilayer; sequence LLLGNFVYTFVVITVCLKAGL. The Cytoplasmic portion of the chain corresponds to 999 to 1008; sequence ETSYWTWFSH. Residues 1009 to 1029 traverse the membrane as a helical segment; that stretch reads IAIWGSIALWVVFFGIYSSLW. At 1030 to 1044 the chain is on the exoplasmic loop side; it reads PAVPMAPDMSGEAAM. A helical membrane pass occupies residues 1045 to 1065; it reads LFSSGVFWVGLLSIPVASLLL. The Cytoplasmic segment spans residues 1066–1164; sequence DVLYKVIKRT…DTTKQRPDEW (99 aa). 1095 to 1102 contacts ATP; sequence GAVVLGKS. Phosphoserine is present on S1126.

Belongs to the cation transport ATPase (P-type) (TC 3.A.3) family. Type IV subfamily. Component of a P4-ATPase flippase complex which consists of a catalytic alpha subunit and an accessory beta subunit. Interacts with TMEM30A to form a flippase complex; this complex forms an intermediate phosphoenzyme. Interacts with TMEM30B; this interaction is reported conflictingly. It depends on Mg(2+) as a cofactor. Post-translationally, cleaved by calpain in a caspase- and calcium influx-dependent manner only during platelet apoptosis and may lead to inactivation. As to expression, found in most tissues except liver and testis. Most abundant in brain and lung. Also detected in fetal tissues. Isoform 1 is expressed in brain. Isoform 2 and isoform 3 are expressed in reticulocytes. Expressed in mouse hippocampus in both dentate gyrus (DG) and the CA3 regions. Expressed in both neuronal as well as non-neuronal cells within the DG. Highly expressed in platelets.

The protein localises to the cytoplasmic vesicle. It is found in the secretory vesicle. The protein resides in the chromaffin granule membrane. Its subcellular location is the cytoplasmic granule. It localises to the cell membrane. The protein localises to the endoplasmic reticulum. It is found in the golgi apparatus. The protein resides in the endomembrane system. The catalysed reaction is ATP + H2O + phospholipidSide 1 = ADP + phosphate + phospholipidSide 2.. It catalyses the reaction a 1,2-diacyl-sn-glycero-3-phospho-L-serine(out) + ATP + H2O = a 1,2-diacyl-sn-glycero-3-phospho-L-serine(in) + ADP + phosphate + H(+). ATPase activity is stimulated by phosphatidylserine (PS) and minimally by phosphatidylethanolamine (PE). ATPase activity is inhibited by the vanadate and by the presence of calcium. Catalytic component of a P4-ATPase flippase complex which catalyzes the hydrolysis of ATP coupled to the transport of aminophospholipids from the outer to the inner leaflet of various membranes and ensures the maintenance of asymmetric distribution of phospholipids. Phospholipid translocation also seems to be implicated in vesicle formation and in uptake of lipid signaling molecules. In vitro, its ATPase activity is selectively and stereospecifically stimulated by phosphatidylserine (PS). The flippase complex ATP8A1:TMEM30A seems to play a role in regulation of cell migration probably involving flippase-mediated translocation of phosphatidylethanolamine (PE) at the cell membrane. Acts as aminophospholipid translocase at the cell membrane in neuronal cells; the activity is associated with hippocampus-dependent learning. May play a role in brain connectivity. In Mus musculus (Mouse), this protein is Phospholipid-transporting ATPase IA.